A 161-amino-acid polypeptide reads, in one-letter code: Phosphopantetheine adenylyltransferase (161 aa).

Ser9 serves as a coordination point for substrate. Residues 9–10 and His17 each bind ATP; that span reads SF. The substrate site is built by Lys41, Thr73, and Arg87. ATP contacts are provided by residues 88–90, Glu98, and 123–129; these read GIR and YQYVSSS.

This sequence belongs to the bacterial CoaD family. As to quaternary structure, homohexamer. Mg(2+) is required as a cofactor.

The protein localises to the cytoplasm. The enzyme catalyses (R)-4'-phosphopantetheine + ATP + H(+) = 3'-dephospho-CoA + diphosphate. The protein operates within cofactor biosynthesis; coenzyme A biosynthesis; CoA from (R)-pantothenate: step 4/5. Its function is as follows. Reversibly transfers an adenylyl group from ATP to 4'-phosphopantetheine, yielding dephospho-CoA (dPCoA) and pyrophosphate. The protein is Phosphopantetheine adenylyltransferase of Levilactobacillus brevis (strain ATCC 367 / BCRC 12310 / CIP 105137 / JCM 1170 / LMG 11437 / NCIMB 947 / NCTC 947) (Lactobacillus brevis).